Here is a 323-residue protein sequence, read N- to C-terminus: Viral cathepsin (323 aa).

Positions 1–16 (MNKILFYLFVYGVVNS) are cleaved as a signal peptide. A propeptide spans 17-112 (AAYDLLKAPN…IVLDQPPGKG (96 aa)) (activation peptide). Cystine bridges form between Cys-133–Cys-174, Cys-167–Cys-207, and Cys-262–Cys-310. Cys-136 is a catalytic residue. N-linked (GlcNAc...) asparagine; by host glycosylation is present at Asn-158. Residues His-269 and Asn-289 contribute to the active site.

This sequence belongs to the peptidase C1 family. In terms of processing, synthesized as an inactive proenzyme and activated by proteolytic removal of the inhibitory propeptide.

It carries out the reaction Endopeptidase of broad specificity, hydrolyzing substrates of both cathepsin L and cathepsin B.. Functionally, cysteine protease that plays an essential role in host liquefaction to facilitate horizontal transmission of the virus. May participate in the degradation of foreign protein expressed by the baculovirus system. This is Viral cathepsin (VCATH) from Helicoverpa zea (Corn earworm moth).